Consider the following 94-residue polypeptide: Small ribosomal subunit protein uS19m (94 aa).

This sequence belongs to the universal ribosomal protein uS19 family.

It localises to the mitochondrion. The protein is Small ribosomal subunit protein uS19m (RPS19) of Petunia hybrida (Petunia).